Reading from the N-terminus, the 261-residue chain is Ribonuclease HII (261 aa).

Over residues 1–20 the composition is skewed to basic and acidic residues; it reads MIRDKSAKRPAKDAPKKAAV. The tract at residues 1 to 23 is disordered; it reads MIRDKSAKRPAKDAPKKAAVKEA. The RNase H type-2 domain maps to 42–230; the sequence is WPVAGCDEAG…VAAARAKHMP (189 aa). The a divalent metal cation site is built by aspartate 48, glutamate 49, and aspartate 139.

It belongs to the RNase HII family. Mn(2+) serves as cofactor. Mg(2+) is required as a cofactor.

The protein resides in the cytoplasm. The catalysed reaction is Endonucleolytic cleavage to 5'-phosphomonoester.. In terms of biological role, endonuclease that specifically degrades the RNA of RNA-DNA hybrids. In Bradyrhizobium diazoefficiens (strain JCM 10833 / BCRC 13528 / IAM 13628 / NBRC 14792 / USDA 110), this protein is Ribonuclease HII.